The sequence spans 261 residues: MCSLEELELWNMIKHKAQKILKKEPILSNFYQKSILNHKKLSHSLSCILSDKLSTSMISEKDIYNIFNKIYANNISIINSVVKDIKAASQRDPVVKHYLTPLLYLKGFHALEAYRLSHYLWNIKRYELSAYLQSRISTVFSVDIHPAASIGSGIMLDHATGIVIGEGVIIENDVSIFHSVTLGGTGSNTGKNRHPIIRKNVTIGAGAKILGNIEVGQGVKVGAGSIVLKNIPPFVTVVGVPAKIIKKIKNSNKNLFQKEKK.

It belongs to the transferase hexapeptide repeat family.

The protein localises to the cytoplasm. The enzyme catalyses L-serine + acetyl-CoA = O-acetyl-L-serine + CoA. The protein operates within amino-acid biosynthesis; L-cysteine biosynthesis; L-cysteine from L-serine: step 1/2. This Buchnera aphidicola subsp. Schizaphis graminum (strain Sg) protein is Serine acetyltransferase (cysE).